Consider the following 276-residue polypeptide: Large ribosomal subunit protein uL2 (276 aa).

2 disordered regions span residues 14–58 (RNAS…GGGH) and 219–276 (PITR…KNRK). Polar residues predominate over residues 16 to 27 (ASVSDFSELTRS). Residues 255 to 276 (RRPKKASNKMIVRRRPSGKNRK) are compositionally biased toward basic residues.

It belongs to the universal ribosomal protein uL2 family. In terms of assembly, part of the 50S ribosomal subunit. Forms a bridge to the 30S subunit in the 70S ribosome.

Functionally, one of the primary rRNA binding proteins. Required for association of the 30S and 50S subunits to form the 70S ribosome, for tRNA binding and peptide bond formation. It has been suggested to have peptidyltransferase activity; this is somewhat controversial. Makes several contacts with the 16S rRNA in the 70S ribosome. This is Large ribosomal subunit protein uL2 from Bifidobacterium longum (strain DJO10A).